Consider the following 292-residue polypeptide: DSC E3 ubiquitin ligase complex subunit 3 (292 aa).

Residues 1–243 (MSAEPLLPTH…PIANIKHNKD (243 aa)) are Extracellular-facing. N-linked (GlcNAc...) asparagine glycosylation is found at Asn11, Asn41, Asn77, Asn99, and Asn145. A helical transmembrane segment spans residues 244–264 (LLLGICVGFFFGVFGILLMKF). The Cytoplasmic portion of the chain corresponds to 265 to 273 (DGLFNRRQK). A helical transmembrane segment spans residues 274-291 (MAIFAGVIVNVMFCLVRG). Position 292 (Phe292) is a topological domain, extracellular.

Belongs to the dsc3 family. As to quaternary structure, component of the DSC E3 ligase complexes composed of at least TUL1, DSC2, DSC3, UBX3, CDC48 as well as VLD1 for the vacuole-localized complex or GLD1 for the Golgi/endosome-localized complex.

Its subcellular location is the endoplasmic reticulum membrane. Functionally, component of the DSC E3 ubiquitin ligase complexes that tag proteins present in Golgi, endosome and vacuole membranes and function in protein homeostasis under non-stress conditions and support a role in protein quality control. Involved in endocytic protein trafficking. The chain is DSC E3 ubiquitin ligase complex subunit 3 from Saccharomyces cerevisiae (strain ATCC 204508 / S288c) (Baker's yeast).